We begin with the raw amino-acid sequence, 314 residues long: Deoxyribonuclease-1-like 1 (314 aa).

Residues 1–37 (MPFGQPGFLWRVPDAHIAMRGLVMAPLLILLVGGTEA) form the signal peptide. Residue Asn102 is glycosylated (N-linked (GlcNAc...) asparagine). Residue Glu113 is part of the active site. The N-linked (GlcNAc...) asparagine glycan is linked to Asn133. His164 is a catalytic residue. A disulfide bond links Cys203 and Cys240. The N-linked (GlcNAc...) asparagine glycan is linked to Asn239.

This sequence belongs to the DNase I family. As to expression, highly expressed in heart and skeletal muscles. Low expression in brain and thymus. Intermediated expression in other tissues.

The protein resides in the endoplasmic reticulum. The sequence is that of Deoxyribonuclease-1-like 1 (Dnase1l1) from Mus musculus (Mouse).